The primary structure comprises 476 residues: Glycogen synthase (476 aa).

Lys15 contributes to the ADP-alpha-D-glucose binding site.

It belongs to the glycosyltransferase 1 family. Bacterial/plant glycogen synthase subfamily.

The enzyme catalyses [(1-&gt;4)-alpha-D-glucosyl](n) + ADP-alpha-D-glucose = [(1-&gt;4)-alpha-D-glucosyl](n+1) + ADP + H(+). It participates in glycan biosynthesis; glycogen biosynthesis. Its function is as follows. Synthesizes alpha-1,4-glucan chains using ADP-glucose. This chain is Glycogen synthase, found in Mycoplasma mobile (strain ATCC 43663 / 163K / NCTC 11711) (Mesomycoplasma mobile).